The chain runs to 372 residues: Proton-coupled zinc antiporter SLC30A2 (372 aa).

Residues 1–140 (MEAKEKQHLL…TMNFGWQRAE (140 aa)) lie on the Cytoplasmic side of the membrane. A Mitochondrial localization signal motif is present at residues 51–54 (HHCH). Residues Cys53, His106, and Asp110 each contribute to the Zn(2+) site. A helical membrane pass occupies residues 141–161 (ILGALVSVLSIWVVTGVLVYL). At 162–175 (AVERLISGDYEIDG) the chain is on the lumenal side. Residues 176–196 (GTMLITSGCAVAVNIIMGLTL) form a helical membrane-spanning segment. Over 197-220 (HQSGHGHSHGTTNQQEENPSVRAA) the chain is Cytoplasmic. A helical transmembrane segment spans residues 221–241 (FIHVIGDFMQSMGVLVAAYIL). Residues His223 and Asp227 each coordinate Zn(2+). At 242–249 (YFKPEYKY) the chain is on the lumenal side. A helical membrane pass occupies residues 250–270 (VDPICTFVFSILVLGTTLTIL). Residues 271–304 (RDVILVLMEGTPKGVDFTAVRDLLLSVEGVEALH) are Cytoplasmic-facing. A Lysosomal targeting motif motif is present at residues 294 to 295 (LL). A Phosphoserine modification is found at Ser296. Residues His304, His321, and Glu355 each contribute to the Zn(2+) site. The chain crosses the membrane as a helical span at residues 305 to 325 (SLHIWALTVAQPVLSVHIAIA). Residues 326–372 (QNTDAQAVLKTASSRLQGKFHFHTVTIQIEDYSEDMKDCQACQGPSD) are Lumenal-facing.

It belongs to the cation diffusion facilitator (CDF) transporter (TC 2.A.4) family. SLC30A subfamily. As to quaternary structure, homodimer. Interacts (via lysosomal targeting motif) with AP3D1; in AP-3-mediated transport to lysosomes. Interacts with TMEM163. In terms of processing, phosphorylated at Ser-296. Phosphorylation at Ser-296 prevents localization to lysosomes. Dephosphorylation of Ser-296 which triggers localization to lysosomes, accumulation of zinc into lysosomes and lysosomal-mediated cell death is induced by TNF-alpha.

The protein resides in the cytoplasmic vesicle. It is found in the secretory vesicle membrane. Its subcellular location is the zymogen granule membrane. It localises to the endosome membrane. The protein localises to the lysosome membrane. The protein resides in the mitochondrion inner membrane. It is found in the cell membrane. The enzyme catalyses Zn(2+)(in) + 2 H(+)(out) = Zn(2+)(out) + 2 H(+)(in). Functionally, electroneutral proton-coupled antiporter concentrating zinc ions into a variety of intracellular organelles including endosomes, zymogen granules and mitochondria. Thereby, plays a crucial role in cellular zinc homeostasis to confer upon cells protection against its potential cytotoxicity. Regulates the zinc concentration of milk, through the transport of zinc ions into secretory vesicles of mammary cells. By concentrating zinc ions into lysosomes participates to lysosomal-mediated cell death during early mammary gland involution. In terms of biological role, electroneutral proton-coupled antiporter mediating the efflux of zinc ions through the plasma membrane. This chain is Proton-coupled zinc antiporter SLC30A2, found in Homo sapiens (Human).